The primary structure comprises 656 residues: Chaperone protein DnaK (656 aa).

Threonine 204 is subject to Phosphothreonine; by autocatalysis. The tract at residues 602 to 656 is disordered; the sequence is KLAERVYAKKGGAAGAPPGGEAEGEPQAQAGGKKEDVVDAEFEEVKDEKKKDEDK. Low complexity predominate over residues 620-632; sequence GGEAEGEPQAQAG. The span at 647–656 shows a compositional bias: basic and acidic residues; it reads KDEKKKDEDK.

Belongs to the heat shock protein 70 family.

Functionally, acts as a chaperone. The chain is Chaperone protein DnaK from Coxiella burnetii (strain CbuG_Q212) (Coxiella burnetii (strain Q212)).